The following is a 434-amino-acid chain: D-amino acid dehydrogenase (434 aa).

An FAD-binding site is contributed by valine 3 to tyrosine 17.

This sequence belongs to the DadA oxidoreductase family. FAD serves as cofactor.

The catalysed reaction is a D-alpha-amino acid + A + H2O = a 2-oxocarboxylate + AH2 + NH4(+). It participates in amino-acid degradation; D-alanine degradation; NH(3) and pyruvate from D-alanine: step 1/1. Its function is as follows. Oxidative deamination of D-amino acids. In Pseudomonas putida (strain ATCC 700007 / DSM 6899 / JCM 31910 / BCRC 17059 / LMG 24140 / F1), this protein is D-amino acid dehydrogenase.